We begin with the raw amino-acid sequence, 142 residues long: Hemoglobin subunit alpha (142 aa).

The Globin domain occupies 2–142; that stretch reads VLSAADKTNV…VSTVLTSKYR (141 aa). The residue at position 4 (S4) is a Phosphoserine. An N6-succinyllysine modification is found at K8. Phosphothreonine is present on T9. K12 bears the N6-succinyllysine mark. Residue K17 is modified to N6-acetyllysine; alternate. K17 is modified (N6-succinyllysine; alternate). K41 is subject to N6-succinyllysine. Residue S50 is modified to Phosphoserine. Residue H59 participates in O2 binding. H88 contacts heme b. The residue at position 103 (S103) is a Phosphoserine. T109 carries the post-translational modification Phosphothreonine. 2 positions are modified to phosphoserine: S125 and S132. A phosphothreonine mark is found at T135 and T138. S139 is subject to Phosphoserine.

This sequence belongs to the globin family. In terms of assembly, heterotetramer of two alpha chains and two beta chains. Red blood cells.

Functionally, involved in oxygen transport from the lung to the various peripheral tissues. Hemopressin acts as an antagonist peptide of the cannabinoid receptor CNR1. Hemopressin-binding efficiently blocks cannabinoid receptor CNR1 and subsequent signaling. The protein is Hemoglobin subunit alpha (HBA) of Equus przewalskii (Przewalski's horse).